The following is a 545-amino-acid chain: CTP synthase (545 aa).

The segment at 1–266 (MTTRYIFVTG…DDLVVKRFGL (266 aa)) is amidoligase domain. Ser14 serves as a coordination point for CTP. A UTP-binding site is contributed by Ser14. Residues 15-20 (SLGKGI) and Asp72 each bind ATP. Mg(2+) contacts are provided by Asp72 and Glu140. CTP-binding positions include 147-149 (DIE), 187-192 (KTKPTQ), and Lys223. UTP-binding positions include 187–192 (KTKPTQ) and Lys223. 239–241 (KDV) contributes to the ATP binding site. One can recognise a Glutamine amidotransferase type-1 domain in the interval 291–542 (VIGMVGKYIE…IAAASAHQKR (252 aa)). Gly352 lines the L-glutamine pocket. Cys379 functions as the Nucleophile; for glutamine hydrolysis in the catalytic mechanism. L-glutamine contacts are provided by residues 380–383 (LGMQ), Glu403, and Arg470. Residues His515 and Glu517 contribute to the active site.

The protein belongs to the CTP synthase family. Homotetramer.

The catalysed reaction is UTP + L-glutamine + ATP + H2O = CTP + L-glutamate + ADP + phosphate + 2 H(+). It carries out the reaction L-glutamine + H2O = L-glutamate + NH4(+). The enzyme catalyses UTP + NH4(+) + ATP = CTP + ADP + phosphate + 2 H(+). It participates in pyrimidine metabolism; CTP biosynthesis via de novo pathway; CTP from UDP: step 2/2. Its activity is regulated as follows. Allosterically activated by GTP, when glutamine is the substrate; GTP has no effect on the reaction when ammonia is the substrate. The allosteric effector GTP functions by stabilizing the protein conformation that binds the tetrahedral intermediate(s) formed during glutamine hydrolysis. Inhibited by the product CTP, via allosteric rather than competitive inhibition. Catalyzes the ATP-dependent amination of UTP to CTP with either L-glutamine or ammonia as the source of nitrogen. Regulates intracellular CTP levels through interactions with the four ribonucleotide triphosphates. The protein is CTP synthase of Shewanella putrefaciens (strain CN-32 / ATCC BAA-453).